The chain runs to 419 residues: Esterase FrsA (419 aa).

It belongs to the FrsA family.

It catalyses the reaction a carboxylic ester + H2O = an alcohol + a carboxylate + H(+). Its function is as follows. Catalyzes the hydrolysis of esters. The polypeptide is Esterase FrsA (Photobacterium profundum (strain SS9)).